The primary structure comprises 268 residues: GTP cyclohydrolase FolE2 (268 aa).

Belongs to the GTP cyclohydrolase IV family.

It catalyses the reaction GTP + H2O = 7,8-dihydroneopterin 3'-triphosphate + formate + H(+). The protein operates within cofactor biosynthesis; 7,8-dihydroneopterin triphosphate biosynthesis; 7,8-dihydroneopterin triphosphate from GTP: step 1/1. In terms of biological role, converts GTP to 7,8-dihydroneopterin triphosphate. The protein is GTP cyclohydrolase FolE2 of Janthinobacterium sp. (strain Marseille) (Minibacterium massiliensis).